The following is a 314-amino-acid chain: Homoserine O-succinyltransferase (314 aa).

The active-site Acyl-thioester intermediate is C142. Positions 163 and 192 each coordinate substrate. H235 functions as the Proton acceptor in the catalytic mechanism. The active site involves E237. Substrate is bound at residue R249.

The protein belongs to the MetA family.

Its subcellular location is the cytoplasm. It catalyses the reaction L-homoserine + succinyl-CoA = O-succinyl-L-homoserine + CoA. It participates in amino-acid biosynthesis; L-methionine biosynthesis via de novo pathway; O-succinyl-L-homoserine from L-homoserine: step 1/1. Transfers a succinyl group from succinyl-CoA to L-homoserine, forming succinyl-L-homoserine. In Aeromonas salmonicida (strain A449), this protein is Homoserine O-succinyltransferase.